Here is a 271-residue protein sequence, read N- to C-terminus: Phosphate import ATP-binding protein PstB (271 aa).

Residues 24–266 (MIGKDVSVYY…PDDQRTQDYI (243 aa)) form the ABC transporter domain. 56-63 (GPSGCGKS) contacts ATP.

This sequence belongs to the ABC transporter superfamily. Phosphate importer (TC 3.A.1.7) family. The complex is composed of two ATP-binding proteins (PstB), two transmembrane proteins (PstC and PstA) and a solute-binding protein (PstS).

Its subcellular location is the cell inner membrane. The enzyme catalyses phosphate(out) + ATP + H2O = ADP + 2 phosphate(in) + H(+). Its function is as follows. Part of the ABC transporter complex PstSACB involved in phosphate import. Responsible for energy coupling to the transport system. The chain is Phosphate import ATP-binding protein PstB from Agrobacterium fabrum (strain C58 / ATCC 33970) (Agrobacterium tumefaciens (strain C58)).